Consider the following 1121-residue polypeptide: Solute carrier family 38 member 10 (1121 aa).

Helical transmembrane passes span 4–24, 36–58, 84–104, 120–140, 153–173, 229–249, 272–292, 323–343, 345–365, and 378–398; these read AAAS…GVSV, IVLG…MFLV, LVET…YVVI, VGGT…VLPL, FSAM…LSSL, IFAS…FFGY, MLRV…ILPC, ALTL…PNVE, ILGL…PALI, and VVLW…LSVS. Disordered stretches follow at residues 434 to 691, 731 to 904, and 965 to 1068; these read VVAV…EEAG, KEIH…AATG, and ISDG…ELAP. Composition is skewed to basic and acidic residues over residues 439–454, 466–475, 493–508, and 544–559; these read EDGR…REEL, PGREDGKEAQ, EAHR…KVVV, and DSER…EVGK. Serine 612 carries the phosphoserine modification. 6 stretches are compositionally biased toward basic and acidic residues: residues 645–659, 668–679, 731–752, 763–773, 802–811, and 863–876; these read DSDH…EEKP, EPREQRDVERAG, KEIH…EVHP, EAPEGKARETM, SLEHPERPVG, and PARE…RLAE. Threonine 772 is subject to Phosphothreonine. Serine 802 carries the post-translational modification Phosphoserine. Serine 890 and serine 966 each carry phosphoserine. A compositionally biased stretch (basic and acidic residues) spans 976-998; that stretch reads HRLDHGGYLEMRKEARGGDHMPV. Phosphoserine is present on serine 999. Basic and acidic residues-rich tracts occupy residues 1035–1044 and 1057–1068; these read DNAKPNRDLK and DLGPHAEGELAP.

It belongs to the amino acid/polyamine transporter 2 family.

It is found in the membrane. It catalyses the reaction L-glutamate(out) = L-glutamate(in). It carries out the reaction L-glutamine(out) = L-glutamine(in). The catalysed reaction is L-alanine(in) = L-alanine(out). The enzyme catalyses L-serine(in) = L-serine(out). It catalyses the reaction L-leucine(in) = L-leucine(out). Its function is as follows. Facilitates bidirectional transport of amino acids. May act as a glutamate sensor that regulates glutamate-glutamine cycle and mTOR signaling in the brain. The transport mechanism remains to be elucidated. The sequence is that of Solute carrier family 38 member 10 from Pongo abelii (Sumatran orangutan).